The sequence spans 82 residues: Small ribosomal subunit protein bS16 (82 aa).

It belongs to the bacterial ribosomal protein bS16 family.

This Saccharophagus degradans (strain 2-40 / ATCC 43961 / DSM 17024) protein is Small ribosomal subunit protein bS16.